A 326-amino-acid polypeptide reads, in one-letter code: GTP cyclohydrolase MptA (326 aa).

It belongs to the GTP cyclohydrolase IV family. In terms of assembly, homodimer. The cofactor is Fe(2+).

It carries out the reaction GTP + H2O = 7,8-dihydroneopterin 2',3'-cyclic phosphate + formate + diphosphate + H(+). Its pathway is cofactor biosynthesis; 5,6,7,8-tetrahydromethanopterin biosynthesis. In terms of biological role, converts GTP to 7,8-dihydro-D-neopterin 2',3'-cyclic phosphate, the first intermediate in the biosynthesis of coenzyme methanopterin. This is GTP cyclohydrolase MptA from Methanoregula boonei (strain DSM 21154 / JCM 14090 / 6A8).